The chain runs to 171 residues: Putative antiporter subunit mnhG2 (171 aa).

The next 3 membrane-spanning stretches (helical) occupy residues 11 to 31 (IAAL…IGIV), 51 to 71 (VLLT…FFSV), and 72 to 92 (RLLL…HLVA). The span at 144-156 (DVQKQRQKEKQQE) shows a compositional bias: basic and acidic residues. The segment at 144–171 (DVQKQRQKEKQQEENIESLSEARRETKD) is disordered.

It belongs to the CPA3 antiporters (TC 2.A.63) subunit G family. May form a heterooligomeric complex that consists of seven subunits: mnhA2, mnhB2, mnhC2, mnhD2, mnhE2, mnhF2 and mnhG2.

The protein resides in the cell membrane. The polypeptide is Putative antiporter subunit mnhG2 (mnhG2) (Staphylococcus haemolyticus (strain JCSC1435)).